A 663-amino-acid polypeptide reads, in one-letter code: MPKIKKKGQAGAAKNYITRTQAVKKLQLSLPDFRKLCIWKGIYPREPRNKKKVSKSATASTTFYYTKDIQYLLHEPLLQKFRDQKVLEKKISRALGRGDVSDAARFERHAARPEATGKPRYTLNHVIRERYPTFNDALRDLDDCLSMLFLFANLPSTSAVPAKMIARCERLCLEFQHYLIVSHSLRKSFLSIKGIYYQANIQGEDILWLVPYKFNQRIVGDVDFRIMGTFVEFYMTLLGFVNYRLYSSIGLKYPPKFDQLKDENGAELGAFSLEGVNMATQGETKAVTNGEEQQQGPDPKVQAEVDKIIKQLKEDESKSDETAEEDAEADDEEKPTDSIDKFEPVAPGGDVLPQPAYSSSDPSQLFANFTFYLSRETPRQPLEFILRAFGCKRIGWDSVLGEGAFTNDESDPSITHHIIDRPVVQAATNEDGDGEDNQTAQKVGPNQRYPGRIYVQPQWVWDCVNDEELKSPELYAPGAALPPHLSPFVKAAPGQYDPTLPLEAQQTEAEAIEADLEDAEKGNAEDGSDVENDMDVDEAEDDEEEEEGDEEDAEEAEEEDAEEDEEESKTLQRQLELEAELQGKKVQNTKVDSKTKAKLEQRKALEKKAREEAEDLERAKGMLSKKKRKLFEQMQYTNNKKSAQDEKLRAKRRKLEKEKAQKA.

Residues 311–321 (QLKEDESKSDE) are compositionally biased toward basic and acidic residues. 3 disordered regions span residues 311–360 (QLKE…YSSS), 428–447 (TNED…GPNQ), and 504–663 (AQQT…AQKA). The segment covering 322 to 334 (TAEEDAEADDEEK) has biased composition (acidic residues). Residues 361 to 477 (DPSQLFANFT…ELKSPELYAP (117 aa)) enclose the BRCT domain. A coiled-coil region spans residues 501-663 (PLEAQQTEAE…KLEKEKAQKA (163 aa)). Acidic residues predominate over residues 526–567 (DGSDVENDMDVDEAEDDEEEEEGDEEDAEEAEEEDAEEDEEE). Positions 591–620 (VDSKTKAKLEQRKALEKKAREEAEDLERAK) are enriched in basic and acidic residues.

The protein belongs to the pescadillo family. In terms of assembly, component of the NOP7 complex, composed of erb1, nop7 and ytm1. The complex is held together by erb1, which interacts with nop7 via its N-terminal domain and with ytm1 via a high-affinity interaction between the seven-bladed beta-propeller domains of the 2 proteins. The NOP7 complex associates with the 66S pre-ribosome.

It is found in the nucleus. It localises to the nucleolus. The protein localises to the nucleoplasm. Component of the NOP7 complex, which is required for maturation of the 25S and 5.8S ribosomal RNAs and formation of the 60S ribosome. The polypeptide is Pescadillo homolog (nop7) (Neurospora crassa (strain ATCC 24698 / 74-OR23-1A / CBS 708.71 / DSM 1257 / FGSC 987)).